The following is a 446-amino-acid chain: MQDQPVIATSDLSAHVGSTVVLRGWLYNKRSSGKLHFLELRDGFGTVQCVMAKSDVGDEVFAAADKVTQESVIDVVGEVKAHPKRAGVYEIAASGFRVLGPTAGEYPISPKEHGTDFLMDHRHLWLRSKRQHAILRVRHTIIQAIRDFFDGRGFTLVDAPVFTPNACEGTSTLFQTDYHGEKAYLTQSGQLYMEAAAAAFGKAYCFGPTFRAEKSKTRRHLAEFWMVEPEVAFMDLAGDMDLAEDFLCFIVERVLERRRPELAVLERDVGKLEAVKKPFPRIRYDEAVAILNEARAEKRKMAGEAEIPDFPWGEDFGGEDETIISGRYDRPVMIHRYPAQVKAFYMKRDPTDDRLALCVDVLAPEGYGEVIGGGQREDDLATLERAIEAHQLPPEAFGWYLDLRRYGTFPHAGFGLGVERSVAWICGLPHVRETIPFPRMLNRLSP.

Belongs to the class-II aminoacyl-tRNA synthetase family. Homodimer.

It is found in the cytoplasm. It catalyses the reaction tRNA(Asn) + L-asparagine + ATP = L-asparaginyl-tRNA(Asn) + AMP + diphosphate + H(+). In Sorangium cellulosum (strain So ce56) (Polyangium cellulosum (strain So ce56)), this protein is Asparagine--tRNA ligase.